Reading from the N-terminus, the 770-residue chain is Signal transducer and activator of transcription 3 (770 aa).

Ala2 is subject to N-acetylalanine. N6-acetyllysine occurs at positions 49 and 87. The Essential for nuclear import motif lies at 150–162; that stretch reads DVRKRVQDLEQKM. Residues 580 to 670 enclose the SH2 domain; that stretch reads WNEGYIMGFI…DATNILVSPL (91 aa). Allysine; alternate occurs at positions 601, 615, and 631. N6-acetyllysine; alternate occurs at positions 601, 615, and 631. Tyr640 carries the phosphotyrosine; by TYK2 modification. Lys685 carries the allysine; alternate modification. An N6-acetyllysine; alternate modification is found at Lys685. The residue at position 705 (Tyr705) is a Phosphotyrosine; by FER and PTK6. Lys707 carries the post-translational modification N6-acetyllysine. Thr714 is subject to Phosphothreonine. A Phosphoserine; by DYRK2, NLK, NEK6, IRAK1, RPS6KA5, ZIPK/DAPK3 and PKC/PRKCE modification is found at Ser727.

The protein belongs to the transcription factor STAT family. Forms a homodimer or a heterodimer with a related family member (at least STAT1). Component of a promoter-binding complex composed of STAT3, NFATC3 and NFATC4; complex formation is enhanced by calcineurin. Interacts with IL31RA, NCOA1, PELP1, SIPAR, SOCS7, STATIP1 and TMF1. Interacts with IL23R in presence of IL23. Interacts (via SH2 domain) with NLK. Interacts with ARL2BP; the interaction is enhanced by LIF and JAK1 expression. Interacts with KPNA4 and KPNA5; KPNA4 may be the primary mediator of nuclear import. Interacts with CAV2; the interaction is increased on insulin-induced tyrosine phosphorylation of CAV2 and leads to STAT3 activation. Interacts with ARL2BP; interaction is enhanced with ARL2. Interacts with NEK6. Binds to CDK9 when activated and nuclear. Interacts with BMX. Interacts with ZIPK/DAPK3. Interacts with PIAS3; the interaction occurs on stimulation by IL6, CNTF or OSM and inhibits the DNA binding activity of STAT3. In prostate cancer cells, interacts with PRKCE and promotes DNA binding activity of STAT3. Interacts with STMN3, antagonizing its microtubule-destabilizing activity. Interacts with the 'Lys-129' acetylated form of BIRC5/survivin. Interacts with FER. Interacts (via SH2 domain) with EIF2AK2/PKR (via the kinase catalytic domain). Interacts with FGFR4. Interacts with INPP5F; the interaction is independent of STAT3 Tyr-705 phosphorylation status. Interacts with OCIAD1. Interacts with OCIAD2. Interacts (unphosphorylated or phosphorylated at Ser-727) with PHB1. Interacts and may form heterodimers with NHLH1. Found in a complex with SLC39A6, SLC39A10 and with the 'Ser-727' phosphorylated form of STAT3 throughout mitosis. Interacts (when acetylated) with EP300 (via bromo domain); interaction takes place following STAT3 acetylation by EP300 and promotes enhanceosome assembly. Interacts (when acetylated) with BRD2 (via bromo domain); interaction promotes STAT3 recruitment to chromatin and T-helper Th17 cell differentiation. Interacts with FAM220A/SIPAR; the interaction occurs in both the nucleus and the cytoplasm, is enhanced by IL6 and promotes STAT3 dephosphorylation. Interacts in both unphosphorylated and phosphorylated forms with FAM220A but interacts preferentially in the phosphorylated form in the nucleus. Interacts with PTPN2; the interaction is promoted by FAM220A and leads to STAT3 dephosphorylation which negatively regulates STAT3 transcriptional activator activity. Post-translationally, activated through tyrosine phosphorylation by BMX. Tyrosine phosphorylated in response to IL6, IL11, CNTF, LIF, KITLG/SCF, CSF1, EGF, PDGF, IFN-alpha, LEP and OSM. Activated KIT promotes phosphorylation on tyrosine residues and subsequent translocation to the nucleus. Tyrosine phosphorylated in response to constitutively activated FGFR1, FGFR2, FGFR3 and FGFR4. Phosphorylated on serine upon DNA damage, probably by ATM or ATR. Serine phosphorylation is important for the formation of stable DNA-binding STAT3 homodimers and maximal transcriptional activity. ARL2BP may participate in keeping the phosphorylated state of STAT3 within the nucleus. Tyrosine phosphorylated upon stimulation with EGF. Upon LPS challenge, phosphorylated within the nucleus by IRAK1. Upon UV-A treatment, phosphorylated on Ser-727 by RPS6KA5. Dephosphorylation on tyrosine residues by PTPN2 negatively regulates IL6/interleukin-6 signaling. Phosphorylation at Tyr-705 by PTK6, isoform M2 of PKM (PKM2) or FER leads to an increase of its transcriptional activity. Phosphorylation at Tyr-705 is increased in the presence of calcineurin. Phosphorylation at Tyr-640 by TYK2 negatively regulates transcriptional activity. In terms of processing, acetylated on lysine residues by EP300/p300, promoting its activation. Acetylation at Lys-49 and Lys-87 by EP300/p300 promotes its activation. Acetylation at Lys-87 by EP300/p300 promotes its association with BRD2 and recruitment to chromatin. Deacetylated at Lys-49 and Lys-87 by HDAC1. Acetylation at Lys-685 by EP300/p300 promotes its homodimerization and activation. Deacetylated at Lys-685 by HDAC3. Acetylated on lysine residues by CREBBP. Deacetylation by LOXL3 leads to disrupt STAT3 dimerization and inhibit STAT3 transcription activity. Oxidation of lysine residues to allysine on STAT3 preferentially takes place on lysine residues that are acetylated. Some lysine residues are oxidized to allysine by LOXL3, leading to disrupt STAT3 dimerization and inhibit STAT3 transcription activity. Oxidation of lysine residues to allysine on STAT3 preferentially takes place on lysine residues that are acetylated. Post-translationally, (Microbial infection) Phosphorylated on Tyr-705 in the presence of S.typhimurium SarA. As to expression, expressed in ventricular cardiomyocytes (at protein level). Expressed in the lung (at protein level). Expressed in the liver, spleen and kidney. In terms of tissue distribution, expressed in the liver.

It localises to the cytoplasm. The protein resides in the nucleus. Its function is as follows. Signal transducer and transcription activator that mediates cellular responses to interleukins, KITLG/SCF, LEP and other growth factors. Once activated, recruits coactivators, such as NCOA1 or MED1, to the promoter region of the target gene. May mediate cellular responses to activated FGFR1, FGFR2, FGFR3 and FGFR4. Upon activation of IL6ST/gp130 signaling by interleukin-6 (IL6), binds to the IL6-responsive elements identified in the promoters of various acute-phase protein genes. Activated by IL31 through IL31RA. Acts as a regulator of inflammatory response by regulating differentiation of naive CD4(+) T-cells into T-helper Th17 or regulatory T-cells (Treg): acetylation promotes its transcription activity and cell differentiation while deacetylation and oxidation of lysine residues by LOXL3 inhibits differentiation. Involved in cell cycle regulation by inducing the expression of key genes for the progression from G1 to S phase, such as CCND1. Mediates the effects of LEP on melanocortin production, body energy homeostasis and lactation. May play an apoptotic role by transctivating BIRC5 expression under LEP activation. Cytoplasmic STAT3 represses macroautophagy by inhibiting EIF2AK2/PKR activity. Plays a crucial role in basal beta cell functions, such as regulation of insulin secretion. Following JAK/STAT signaling activation and as part of a complex with NFATC3 and NFATC4, binds to the alpha-beta E4 promoter region of CRYAB and activates transcription in cardiomyocytes. Plays an important role in host defense in methicillin-resistant S.aureus lung infection by regulating the expression of the antimicrobial lectin REG3G. The protein is Signal transducer and activator of transcription 3 of Mus musculus (Mouse).